A 428-amino-acid polypeptide reads, in one-letter code: Spliceosome RNA helicase DDX39B (428 aa).

Residues 1-19 are compositionally biased toward acidic residues; sequence MAENDVDNELLDYEDDEVE. The tract at residues 1–31 is disordered; it reads MAENDVDNELLDYEDDEVETAAGGDGAEAPA. An N-acetylalanine modification is found at Ala-2. Lys-36 carries the N6-acetyllysine; alternate modification. Lys-36 is covalently cross-linked (Glycyl lysine isopeptide (Lys-Gly) (interchain with G-Cter in SUMO2); alternate). 2 positions are modified to phosphoserine: Ser-38 and Ser-41. Positions 45 to 73 match the Q motif motif; sequence SGFRDFLLKPELLRAIVDCGFEHPSEVQH. In terms of domain architecture, Helicase ATP-binding spans 76–249; sequence IPQAILGMDV…RKFMQDPMEI (174 aa). 89 to 96 contacts ATP; the sequence is AKSGMGKT. Thr-172 bears the Phosphothreonine mark. Residues 196-199 carry the DECD box motif; the sequence is DECD. In terms of domain architecture, Helicase C-terminal spans 261 to 422; sequence GLQQYYVKLK…ELPDEIDISS (162 aa).

The protein belongs to the DEAD box helicase family. DECD subfamily. Homodimer, and heterodimer with DDX39A. DDX39B interacts with the THO subcomplex to form the THO-DDX39B complex which multimerizes into a 28-subunit tetrameric assembly. Component of the transcription/export (TREX) complex at least composed of ALYREF/THOC4, DDX39B, SARNP/CIP29, CHTOP and the THO subcomplex; in the complex interacts with THOC2. THOC1-THOC2-THOC3-DDX39B subcomplex is sufficient for the interaction with export factor NXF1-NXT1. TREX seems to have a dynamic structure involving ATP-dependent remodeling. Within the TREX complex bridges ALYREF/THOC4 and the THO subcomplex, and, in a ATP-dependent manner, ALYREF/THOC4 and SARNP/CIP29. Component of the spliceosome. Interacts directly with U2AF2. Interacts with RBM8A, RNPS1 and SRRM1, FYTTD1/UIF, THOC1, MX1 and POLDIP3. Interacts with LUZP4. Interacts with SARNP/CIP29 (via the C-terminal domain); the interaction is direct and facilitates RNA binding of DDX39B.

The protein resides in the nucleus. The protein localises to the nucleus speckle. Its subcellular location is the cytoplasm. The catalysed reaction is ATP + H2O = ADP + phosphate + H(+). In terms of biological role, involved in nuclear export of spliced and unspliced mRNA. Component of the TREX complex which is thought to couple mRNA transcription, processing and nuclear export, and specifically associates with spliced mRNA and not with unspliced pre-mRNA. The TREX complex is recruited to spliced mRNAs by a transcription-independent mechanism, binds to mRNA upstream of the exon-junction complex (EJC) and is recruited in a splicing- and cap-dependent manner to a region near the 5' end of the mRNA where it functions in mRNA export to the cytoplasm via the TAP/NXF1 pathway. The THOC1-THOC2-THOC3 core complex alone is sufficient to promote ATPase activity of DDX39B; in the complex THOC2 is the only component that directly interacts with DDX39B. Associates with SARNP/CIP29, which facilitates RNA binding of DDX39B and likely plays a role in mRNA export. May undergo several rounds of ATP hydrolysis during assembly of TREX to drive subsequent loading of components such as ALYREF/THOC4 and CHTOP onto mRNA. Also associates with pre-mRNA independent of ALYREF/THOC4. Involved in the nuclear export of intronless mRNA; the ATP-bound form is proposed to recruit export adapter ALYREF/THOC4 to intronless mRNA; its ATPase activity is cooperatively stimulated by RNA and ALYREF/THOC4 and ATP hydrolysis is thought to trigger the dissociation from RNA to allow the association of ALYREF/THOC4 and the NXF1-NXT1 heterodimer. Involved in transcription elongation and genome stability. Functionally, splice factor that is required for the first ATP-dependent step in spliceosome assembly and for the interaction of U2 snRNP with the branchpoint. Has both RNA-stimulated ATP binding/hydrolysis activity and ATP-dependent RNA unwinding activity. Even with the stimulation of RNA, the ATPase activity is weak. Can only hydrolyze ATP but not other NTPs. The RNA stimulation of ATPase activity does not have a strong preference for the sequence and length of the RNA. However, ssRNA stimulates the ATPase activity much more strongly than dsRNA. Can unwind 5' or 3' overhangs or blunt end RNA duplexes in vitro. The ATPase and helicase activities are not influenced by U2AF2; the effect of ALYREF/THOC4 is reported conflictingly. The sequence is that of Spliceosome RNA helicase DDX39B (DDX39B) from Bos taurus (Bovine).